We begin with the raw amino-acid sequence, 460 residues long: Ribosomal protein uS12 methylthiotransferase RimO (460 aa).

Residues 17–128 (PAVAVLHLGC…IVQVIQRAER (112 aa)) enclose the MTTase N-terminal domain. The [4Fe-4S] cluster site is built by cysteine 26, cysteine 62, cysteine 91, cysteine 166, cysteine 170, and cysteine 173. Positions 152–381 (TTHAPVAYLR…MQLQQGIAFR (230 aa)) constitute a Radical SAM core domain. Residues 384 to 450 (REQVGQVVPV…PYDLFGQVVE (67 aa)) enclose the TRAM domain.

Belongs to the methylthiotransferase family. RimO subfamily. The cofactor is [4Fe-4S] cluster.

The protein localises to the cytoplasm. It carries out the reaction L-aspartate(89)-[ribosomal protein uS12]-hydrogen + (sulfur carrier)-SH + AH2 + 2 S-adenosyl-L-methionine = 3-methylsulfanyl-L-aspartate(89)-[ribosomal protein uS12]-hydrogen + (sulfur carrier)-H + 5'-deoxyadenosine + L-methionine + A + S-adenosyl-L-homocysteine + 2 H(+). Functionally, catalyzes the methylthiolation of an aspartic acid residue of ribosomal protein uS12. This Synechococcus sp. (strain JA-3-3Ab) (Cyanobacteria bacterium Yellowstone A-Prime) protein is Ribosomal protein uS12 methylthiotransferase RimO.